Here is a 151-residue protein sequence, read N- to C-terminus: Large ribosomal subunit protein bL9 (151 aa).

Belongs to the bacterial ribosomal protein bL9 family.

In terms of biological role, binds to the 23S rRNA. This chain is Large ribosomal subunit protein bL9, found in Thermosipho africanus (strain TCF52B).